Here is a 1104-residue protein sequence, read N- to C-terminus: Extended synaptotagmin-1 (1104 aa).

Methionine 1 bears the N-acetylmethionine mark. At 1-38 (MERSPGEGPSPSPTDQPSAPSDPTGQPPAAHAKPDPGS) the chain is on the cytoplasmic side. Positions 1–47 (MERSPGEGPSPSPTDQPSAPSDPTGQPPAAHAKPDPGSGGQPAGPGA) are disordered. The segment covering 15 to 24 (DQPSAPSDPT) has biased composition (polar residues). A compositionally biased stretch (gly residues) spans 37 to 47 (GSGGQPAGPGA). A helical membrane pass occupies residues 39–59 (GGQPAGPGAAGEALAVLTSFG). The Lumenal segment spans residues 60 to 62 (KRL). The chain crosses the membrane as a helical span at residues 63 to 83 (LVLIPVYLAGAVGLSVGFVLF). At 84 to 1104 (GLALYLGWRR…LMDDKDKGSS (1021 aa)) the chain is on the cytoplasmic side. Residues 91–116 (WRRVRDEKERSLRAARQLLDDEEQLT) adopt a coiled-coil conformation. Residues 135–313 (DVEKAEWLNK…LPNRLLVPLV (179 aa)) enclose the SMP-LTD domain. C2 domains lie at 312–433 (LVPD…DDWF), 460–580 (QVLQ…QLSS), 627–751 (SVDA…DEWL), and 777–899 (LEEV…TLNS). Serine 324 is subject to Phosphoserine; by CDK5. Ca(2+) contacts are provided by lysine 344, aspartate 345, aspartate 357, aspartate 404, aspartate 406, aspartate 408, aspartate 410, and aspartate 411. Disordered stretches follow at residues 617–641 (VDSENPQRGSSVDAPPRPCHTTPDS), 813–833 (RKGTKHPSPYATLTVGDTSHK), and 924–950 (SHSYSHSSSSLSEEPELSGGPPHVTSS). At lysine 817 the chain carries N6-acetyllysine. 2 positions are modified to phosphoserine: serine 820 and serine 941. The span at 925–946 (HSYSHSSSSLSEEPELSGGPPH) shows a compositional bias: low complexity. Phosphothreonine is present on threonine 948. Residues serine 949 and serine 963 each carry the phosphoserine modification. Residues 971-1093 (PLGQVKLTVW…DLSQGVARWY (123 aa)) form the C2 5 domain. At tyrosine 1009 the chain carries Phosphotyrosine. A required for phosphatidylinositol 4,5-bisphosphate-dependent location at the cell membrane region spans residues 1018 to 1025 (KNRGTKRK). Serine 1034 is subject to Phosphoserine.

It belongs to the extended synaptotagmin family. Interacts with ESYT2 and ESYT3. Interacts with ADGRD1; inhibiting the G-protein-coupled receptor activity of ADGRD1. Interaction with ADGRD1 is abolished when cytosolic calcium increases, relieving ADGRD1 G-protein-coupled receptor activity. Interacts (phosphorylated form) with SLC2A4. Phosphorylated on Ser residues in insulin-treated adipocytes (in vitro); this promotes interaction with SLC2A4.

Its subcellular location is the endoplasmic reticulum membrane. The protein localises to the cell membrane. Its function is as follows. Binds calcium (via the C2 domains) and translocates to sites of contact between the endoplasmic reticulum and the cell membrane in response to increased cytosolic calcium levels. Helps tether the endoplasmic reticulum to the cell membrane and promotes the formation of appositions between the endoplasmic reticulum and the cell membrane. Acts as an inhibitor of ADGRD1 G-protein-coupled receptor activity in absence of cytosolic calcium. Binds glycerophospholipids in a barrel-like domain and may play a role in cellular lipid transport. This is Extended synaptotagmin-1 (ESYT1) from Pongo abelii (Sumatran orangutan).